We begin with the raw amino-acid sequence, 338 residues long: Starch-binding domain-containing protein 1 (338 aa).

The Extracellular portion of the chain corresponds to 1-6; the sequence is MGAVWS. Residues 7–23 traverse the membrane as a helical segment; it reads ALLVGGGLAGALILWLL. The Cytoplasmic segment spans residues 24-338; sequence RGDSGAPGKD…KVVHGWWGIH (315 aa). Disordered regions lie at residues 30-73 and 120-148; these read PGKD…RELV and KIPDTHSRADSEAARNQSPGSHGGEWRLP. The segment covering 36–52 has biased composition (low complexity); that stretch reads AEPPQKGAPPGEAAAPG. A compositionally biased stretch (gly residues) spans 53–62; sequence DGPGGGGSGG. At Ser68 the chain carries Phosphoserine. A compositionally biased stretch (basic and acidic residues) spans 122–132; the sequence is PDTHSRADSEA. Residues Ser140, Ser167, and Ser179 each carry the phosphoserine modification. The short motif at 185–191 is the LIR element; sequence HEDWEVV. Phosphoserine occurs at positions 195, 196, 205, 209, 212, 220, and 223. A CBM20 domain is found at 238–337; that stretch reads SLKPQQVSIQ…DKVVHGWWGI (100 aa).

As to quaternary structure, interacts with the ATG8 family proteins GABARAP and GABARAPL1. Interacts with several glycogen-associated proteins, such as GYS2 (liver glycogen synthase), GDE (glycogen debranching enzyme), GBE1 (glycogen branching enzyme 1) and EPM2A (Laforin). Ubiquitinated, which leads to proteasomal degradation. In terms of tissue distribution, expressed at high level in glycogen-accumulating organs such as muscle and liver. Trace signals are also found in brain, kidney, and pancreas.

It is found in the preautophagosomal structure membrane. It localises to the endoplasmic reticulum membrane. The protein localises to the cell membrane. The protein resides in the sarcolemma. Its subcellular location is the T-tubule. Its function is as follows. Acts as a cargo receptor for glycogen. Delivers its cargo to an autophagic pathway called glycophagy, resulting in the transport of glycogen to lysosomes. In Mus musculus (Mouse), this protein is Starch-binding domain-containing protein 1.